The following is a 378-amino-acid chain: Carbamoyl phosphate synthase small chain (378 aa).

Residues 1-188 are CPSase; the sequence is MLPSFPPAIL…LGRGYGVQDK (188 aa). L-glutamine is bound by residues serine 50, glycine 240, and glycine 242. Residues 192–378 enclose the Glutamine amidotransferase type-1 domain; sequence HVVAYDFGVK…FTAAMAERKQ (187 aa). The active-site Nucleophile is the cysteine 268. 5 residues coordinate L-glutamine: leucine 269, glutamine 272, asparagine 310, glycine 312, and phenylalanine 313. Catalysis depends on residues histidine 352 and glutamate 354.

This sequence belongs to the CarA family. Composed of two chains; the small (or glutamine) chain promotes the hydrolysis of glutamine to ammonia, which is used by the large (or ammonia) chain to synthesize carbamoyl phosphate. Tetramer of heterodimers (alpha,beta)4.

It carries out the reaction hydrogencarbonate + L-glutamine + 2 ATP + H2O = carbamoyl phosphate + L-glutamate + 2 ADP + phosphate + 2 H(+). The enzyme catalyses L-glutamine + H2O = L-glutamate + NH4(+). It functions in the pathway amino-acid biosynthesis; L-arginine biosynthesis; carbamoyl phosphate from bicarbonate: step 1/1. It participates in pyrimidine metabolism; UMP biosynthesis via de novo pathway; (S)-dihydroorotate from bicarbonate: step 1/3. In terms of biological role, small subunit of the glutamine-dependent carbamoyl phosphate synthetase (CPSase). CPSase catalyzes the formation of carbamoyl phosphate from the ammonia moiety of glutamine, carbonate, and phosphate donated by ATP, constituting the first step of 2 biosynthetic pathways, one leading to arginine and/or urea and the other to pyrimidine nucleotides. The small subunit (glutamine amidotransferase) binds and cleaves glutamine to supply the large subunit with the substrate ammonia. This chain is Carbamoyl phosphate synthase small chain, found in Ralstonia nicotianae (strain ATCC BAA-1114 / GMI1000) (Ralstonia solanacearum).